We begin with the raw amino-acid sequence, 220 residues long: Urease accessory protein UreG (220 aa).

18-25 (GPVGSGKT) lines the GTP pocket.

The protein belongs to the SIMIBI class G3E GTPase family. UreG subfamily. Homodimer. UreD, UreF and UreG form a complex that acts as a GTP-hydrolysis-dependent molecular chaperone, activating the urease apoprotein by helping to assemble the nickel containing metallocenter of UreC. The UreE protein probably delivers the nickel.

The protein resides in the cytoplasm. Functionally, facilitates the functional incorporation of the urease nickel metallocenter. This process requires GTP hydrolysis, probably effectuated by UreG. This Yersinia pestis protein is Urease accessory protein UreG.